A 364-amino-acid chain; its full sequence is Medium-wave-sensitive opsin 1 (364 aa).

The interval 1-24 (MAQRWDPQRLAGGQPQDSHEDSTQ) is disordered. The Extracellular portion of the chain corresponds to 1–52 (MAQRWDPQRLAGGQPQDSHEDSTQSSIFTYTNSNATRGPFEGPNYHIAPRWV). Positions 17–43 (DSHEDSTQSSIFTYTNSNATRGPFEGP) are required for 11-cis-retinal regeneration. Asn34 carries an N-linked (GlcNAc...) asparagine glycan. Residues 53–77 (YHITSTWMIIVVIASVFTNGLVLVA) traverse the membrane as a helical segment. The Cytoplasmic portion of the chain corresponds to 78 to 89 (TMKFKKLRHPLN). A helical transmembrane segment spans residues 90–115 (WILVNLAIADLAETVIASTISVVNQL). The Extracellular portion of the chain corresponds to 116-129 (YGYFVLGHPLCVVE). A disulfide bridge links Cys126 with Cys203. The chain crosses the membrane as a helical span at residues 130 to 149 (GYTVSVCGITGLWSLAIISW). The Cytoplasmic portion of the chain corresponds to 150-168 (ERWLVVCKPFGNMRFDAKL). Residues 169 to 192 (AIVGIAFSWIWSAVWTAPPIFGWS) form a helical membrane-spanning segment. The Extracellular portion of the chain corresponds to 193 to 218 (RYWPYGLKTSCGPDVFSGTSYPGVQS). The chain crosses the membrane as a helical span at residues 219–246 (YMMVLMVTCCIIPLSIIILCYLQVWLAI). The Cytoplasmic portion of the chain corresponds to 247–268 (RAVAKQQKESESTQKAEKEVTR). A helical transmembrane segment spans residues 269–292 (MVVVMVFAYCLCWGPYTFFACFAT). Residues 293-300 (ANPGYAFH) are Extracellular-facing. Residues 301–320 (PLVAALPAYFAKSATIYNPI) form a helical membrane-spanning segment. Residue Lys312 is modified to N6-(retinylidene)lysine. The Cytoplasmic segment spans residues 321–364 (IYVFMNRQFRNCILQLFGKKVDDTSELSSASKTEASSVSSVSPA).

The protein belongs to the G-protein coupled receptor 1 family. Opsin subfamily. In terms of assembly, monomer. Homodimer. Homotetramer. Post-translationally, O-glycosylated. In terms of processing, phosphorylated on some or all of the serine and threonine residues present in the C-terminal region. In terms of tissue distribution, expressed in cone photoreceptor cells.

The protein resides in the membrane. Its function is as follows. Visual pigments are the light-absorbing molecules that mediate vision. They consist of an apoprotein, opsin, covalently linked to cis-retinal. May increase spectral sensitivity in dim light. The chain is Medium-wave-sensitive opsin 1 (OPN1MW) from Sciurus carolinensis (Eastern gray squirrel).